Reading from the N-terminus, the 413-residue chain is DNA primase DnaG (413 aa).

The 79-residue stretch at 168–246 (PNLIIVEGRA…KIDYVARAPV (79 aa)) folds into the Toprim domain. 3 residues coordinate Mg(2+): Glu174, Asp219, and Asp221.

It belongs to the archaeal DnaG primase family. As to quaternary structure, forms a ternary complex with MCM helicase and DNA. Component of the archaeal exosome complex. Requires Mg(2+) as cofactor.

It carries out the reaction ssDNA + n NTP = ssDNA/pppN(pN)n-1 hybrid + (n-1) diphosphate.. In terms of biological role, RNA polymerase that catalyzes the synthesis of short RNA molecules used as primers for DNA polymerase during DNA replication. Also part of the exosome, which is a complex involved in RNA degradation. Acts as a poly(A)-binding protein that enhances the interaction between heteromeric, adenine-rich transcripts and the exosome. The chain is DNA primase DnaG from Metallosphaera sedula (strain ATCC 51363 / DSM 5348 / JCM 9185 / NBRC 15509 / TH2).